A 30-amino-acid chain; its full sequence is Cyclotide cter-Q (30 aa).

The cyclopeptide (Gly-Asn) cross-link spans 1-30 (GIPCGESCVFIPCISTVIGCSCKNKVCYRN). 3 disulfide bridges follow: Cys4–Cys20, Cys8–Cys22, and Cys13–Cys27.

This is a cyclic peptide.

Its subcellular location is the secreted. Probably participates in a plant defense mechanism. This Clitoria ternatea (Butterfly pea) protein is Cyclotide cter-Q.